We begin with the raw amino-acid sequence, 333 residues long: D-fructose 1,6-bisphosphatase class 2/sedoheptulose 1,7-bisphosphatase (333 aa).

Mn(2+)-binding residues include aspartate 33, glutamate 57, aspartate 85, and glutamate 88. Substrate is bound by residues 88–90, tyrosine 119, 164–166, and 186–188; these read EGT, RAR, and DGD. Glutamate 213 is a Mn(2+) binding site.

It belongs to the FBPase class 2 family. In terms of assembly, homotetramer. It depends on Mn(2+) as a cofactor.

The catalysed reaction is beta-D-fructose 1,6-bisphosphate + H2O = beta-D-fructose 6-phosphate + phosphate. It catalyses the reaction D-sedoheptulose 1,7-bisphosphate + H2O = D-sedoheptulose 7-phosphate + phosphate. It functions in the pathway carbohydrate biosynthesis; Calvin cycle. Catalyzes the hydrolysis of fructose 1,6-bisphosphate (Fru 1,6-P2) and sedoheptulose 1,7-bisphosphate (Sed 1,7-P2) to fructose 6-phosphate and sedoheptulose 7-phosphate, respectively. This Prochlorococcus marinus (strain MIT 9515) protein is D-fructose 1,6-bisphosphatase class 2/sedoheptulose 1,7-bisphosphatase.